Here is a 691-residue protein sequence, read N- to C-terminus: Two-component response regulator ORR21 (691 aa).

Residues 17 to 132 enclose the Response regulatory domain; sequence KVLVVDDDPT…ELKNIWQHVI (116 aa). Asp68 carries the post-translational modification 4-aspartylphosphate. Positions 139 to 155 are enriched in basic and acidic residues; sequence NKEHEHSGSLDDTDRTR. The segment at 139–204 is disordered; the sequence is NKEHEHSGSL…DPSSTSKKPR (66 aa). Positions 199–258 form a DNA-binding region, myb-like GARP; it reads TSKKPRVVWSVELHQQFVNAVNHLGIDKAVPKKILELMNVPGLTRENVASHLQKFRLYLK.

It belongs to the ARR family. Type-B subfamily. Post-translationally, two-component system major event consists of a His-to-Asp phosphorelay between a sensor histidine kinase (HK) and a response regulator (RR). In plants, the His-to-Asp phosphorelay involves an additional intermediate named Histidine-containing phosphotransfer protein (HPt). This multistep phosphorelay consists of a His-Asp-His-Asp sequential transfer of a phosphate group between first a His and an Asp of the HK protein, followed by the transfer to a conserved His of the HPt protein and finally the transfer to an Asp in the receiver domain of the RR protein.

It localises to the nucleus. In terms of biological role, transcriptional activator that binds specific DNA sequence. Functions as a response regulator involved in His-to-Asp phosphorelay signal transduction system. Phosphorylation of the Asp residue in the receiver domain activates the ability of the protein to promote the transcription of target genes. May directly activate some type-A response regulators in response to cytokinins. The protein is Two-component response regulator ORR21 of Oryza sativa subsp. japonica (Rice).